The sequence spans 299 residues: Oxygen-dependent coproporphyrinogen-III oxidase (299 aa).

Ser-92 provides a ligand contact to substrate. His-96 and His-106 together coordinate Mn(2+). Catalysis depends on His-106, which acts as the Proton donor. 108-110 (NVR) is a binding site for substrate. Residues His-145 and His-175 each coordinate Mn(2+). The important for dimerization stretch occupies residues 240–275 (YVEFNLVWDRGTLFGLQTGGRTESILMSMPPLVRWE). 258-260 (GGR) is a binding site for substrate.

This sequence belongs to the aerobic coproporphyrinogen-III oxidase family. Homodimer. Requires Mn(2+) as cofactor.

The protein resides in the cytoplasm. It catalyses the reaction coproporphyrinogen III + O2 + 2 H(+) = protoporphyrinogen IX + 2 CO2 + 2 H2O. Its pathway is porphyrin-containing compound metabolism; protoporphyrin-IX biosynthesis; protoporphyrinogen-IX from coproporphyrinogen-III (O2 route): step 1/1. Functionally, involved in the heme biosynthesis. Catalyzes the aerobic oxidative decarboxylation of propionate groups of rings A and B of coproporphyrinogen-III to yield the vinyl groups in protoporphyrinogen-IX. The chain is Oxygen-dependent coproporphyrinogen-III oxidase from Escherichia coli (strain K12 / MC4100 / BW2952).